The following is a 137-amino-acid chain: Small ribosomal subunit protein uS9c (137 aa).

Belongs to the universal ribosomal protein uS9 family.

Its subcellular location is the plastid. It localises to the chloroplast. In Chlorella vulgaris (Green alga), this protein is Small ribosomal subunit protein uS9c (rps9).